Reading from the N-terminus, the 331-residue chain is Hydroxyacylglutathione hydrolase 1, mitochondrial (331 aa).

A mitochondrion-targeting transit peptide spans 1–76; that stretch reads MPVISKASST…HFCSISNMPS (76 aa). Positions 131 and 133 each coordinate Zn(2+). The Fe cation site is built by Asp-135 and His-136. Residues His-189 and Asp-208 each coordinate Zn(2+). Residue Asp-208 coordinates Fe cation. A substrate-binding site is contributed by 246-248; that stretch reads REN.

The protein belongs to the metallo-beta-lactamase superfamily. Glyoxalase II family. Requires Fe(2+) as cofactor. Fe(3+) is required as a cofactor. It depends on Zn(2+) as a cofactor. As to expression, mainly expressed in roots, flowers and flower buds. Also detected in leaves.

It is found in the mitochondrion. It carries out the reaction an S-(2-hydroxyacyl)glutathione + H2O = a 2-hydroxy carboxylate + glutathione + H(+). It functions in the pathway secondary metabolite metabolism; methylglyoxal degradation; (R)-lactate from methylglyoxal: step 2/2. Its function is as follows. Thiolesterase that catalyzes the hydrolysis of S-D-lactoyl-glutathione to form glutathione and D-lactic acid. The protein is Hydroxyacylglutathione hydrolase 1, mitochondrial (GLX2-1) of Arabidopsis thaliana (Mouse-ear cress).